The chain runs to 246 residues: Mast cell protease-like protein (246 aa).

Residues 1-18 (MQALLFLMALLLPSGAGA) form the signal peptide. Positions 19–20 (EE) are cleaved as a propeptide — activation peptide. The 224-residue stretch at 21–244 (IIGGVESEPH…HVPWINRVIK (224 aa)) folds into the Peptidase S1 domain. A disulfide bond links C50 and C66. Residues H65 and D109 each act as charge relay system in the active site. Cystine bridges form between C143-C208 and C174-C187. Catalysis depends on S202, which acts as the Charge relay system.

It belongs to the peptidase S1 family. Granzyme subfamily.

This chain is Mast cell protease-like protein (Mcptl), found in Mus musculus (Mouse).